Consider the following 119-residue polypeptide: Protein TusC (119 aa).

This sequence belongs to the DsrF/TusC family. As to quaternary structure, heterohexamer, formed by a dimer of trimers. The hexameric TusBCD complex contains 2 copies each of TusB, TusC and TusD. The TusBCD complex interacts with TusE.

It is found in the cytoplasm. Functionally, part of a sulfur-relay system required for 2-thiolation of 5-methylaminomethyl-2-thiouridine (mnm(5)s(2)U) at tRNA wobble positions. The polypeptide is Protein TusC (Photorhabdus laumondii subsp. laumondii (strain DSM 15139 / CIP 105565 / TT01) (Photorhabdus luminescens subsp. laumondii)).